A 393-amino-acid polypeptide reads, in one-letter code: DNA-directed RNA polymerase subunit Rpo1C (393 aa).

Belongs to the RNA polymerase beta' chain family. In terms of assembly, part of the 13-subunit RNA polymerase complex. Interacts with TFS4.

The protein resides in the cytoplasm. The enzyme catalyses RNA(n) + a ribonucleoside 5'-triphosphate = RNA(n+1) + diphosphate. Functionally, DNA-dependent RNA polymerase (RNAP) catalyzes the transcription of DNA into RNA using the four ribonucleoside triphosphates as substrates. Forms part of the jaw domain. Reconstitution experiments show this subunit is required for basic activity. This Sulfolobus acidocaldarius (strain ATCC 33909 / DSM 639 / JCM 8929 / NBRC 15157 / NCIMB 11770) protein is DNA-directed RNA polymerase subunit Rpo1C.